Reading from the N-terminus, the 452-residue chain is Mitochondrial distribution and morphology protein 10 (452 aa).

A disordered region spans residues 105 to 130 (PLAPESWDSDGPGHEGSDGQEDETTP).

The protein belongs to the MDM10 family. Component of the ER-mitochondria encounter structure (ERMES) or MDM complex, composed of MMM1, MDM10, MDM12 and MDM34. Associates with the mitochondrial outer membrane sorting assembly machinery SAM(core) complex.

The protein resides in the mitochondrion outer membrane. Its function is as follows. Component of the ERMES/MDM complex, which serves as a molecular tether to connect the endoplasmic reticulum and mitochondria. Components of this complex are involved in the control of mitochondrial shape and protein biogenesis and may function in phospholipid exchange. MDM10 is involved in the late assembly steps of the general translocase of the mitochondrial outer membrane (TOM complex). Functions in the TOM40-specific route of the assembly of outer membrane beta-barrel proteins, including the association of TOM40 with the receptor TOM22 and small TOM proteins. Can associate with the SAM(core) complex as well as the MDM12-MMM1 complex, both involved in late steps of the major beta-barrel assembly pathway, that is responsible for biogenesis of all outer membrane beta-barrel proteins. May act as a switch that shuttles between both complexes and channels precursor proteins into the TOM40-specific pathway. Plays a role in mitochondrial morphology and in the inheritance of mitochondria. The sequence is that of Mitochondrial distribution and morphology protein 10 from Uncinocarpus reesii (strain UAMH 1704).